The sequence spans 226 residues: uncharacterized protein (226 aa).

One can recognise an HTH cro/C1-type domain in the interval 168 to 226; the sequence is ISALRNKLGLTQTDLGKRINVDANVIRNIETGDLVAFNVQDPMVRSLAYALGIRTIKYQ. A DNA-binding region (H-T-H motif) is located at residues 179–198; sequence QTDLGKRINVDANVIRNIET.

This is an uncharacterized protein from Acanthamoeba polyphaga mimivirus (APMV).